The primary structure comprises 423 residues: Sphingomyelin phosphodiesterase 2 (423 aa).

Residue E49 coordinates Mg(2+). H272 (proton acceptor) is an active-site residue. The next 2 membrane-spanning stretches (helical) occupy residues 330–350 (VIGLGLLLLALLCVLAAGGGA) and 354–374 (AILLWTPSVGLVLWAGAFYLF). Residues 400 to 423 (QDLGPEPQPALLLGQQEGDRTKEQ) are disordered.

This sequence belongs to the neutral sphingomyelinase family. Mg(2+) serves as cofactor.

It is found in the cell membrane. The enzyme catalyses a sphingomyelin + H2O = phosphocholine + an N-acylsphing-4-enine + H(+). It catalyses the reaction an N-(acyl)-sphingosylphosphocholine + H2O = an N-acyl-sphingoid base + phosphocholine + H(+). It carries out the reaction 1-O-octadecyl-sn-glycero-3-phosphocholine + H2O = 1-O-octadecyl-sn-glycerol + phosphocholine + H(+). The catalysed reaction is 1-O-hexadecyl-sn-glycero-3-phosphocholine + H2O = 1-O-hexadecyl-sn-glycerol + phosphocholine + H(+). The enzyme catalyses 1-hexadecanoyl-sn-glycero-3-phosphocholine + H2O = 1-hexadecanoyl-sn-glycerol + phosphocholine + H(+). It catalyses the reaction a sphingosylphosphocholine + H2O = a sphingoid base + phosphocholine + H(+). It functions in the pathway lipid metabolism; sphingolipid metabolism. In terms of biological role, catalyzes, at least in vitro, the hydrolysis of sphingomyelin to form ceramide and phosphocholine. Also hydrolyzes 1-O-alkyl-2-lyso-sn-glycero-3-phosphocholine (lyso-platelet-activating factor) in vivo. Also acts on 1-acyl-2-lyso-sn-glycero-3-phosphocholine (lyso-PC) and sphingosylphosphocholine. The sequence is that of Sphingomyelin phosphodiesterase 2 from Homo sapiens (Human).